Reading from the N-terminus, the 420-residue chain is Cyclin-B2-1 (420 aa).

Positions 1-61 (MDRASENRRL…EKSGKEEQKP (61 aa)) are disordered. A compositionally biased stretch (basic and acidic residues) spans 49 to 60 (PMLEKSGKEEQK).

The protein belongs to the cyclin family. Cyclin AB subfamily. As to quaternary structure, interacts with CDKB2-1. Expressed in the root apices.

Functionally, involved in the control of the cell cycle at the G2/M (mitosis) transition. May activate CDKB2-1 kinase. In Oryza sativa subsp. japonica (Rice), this protein is Cyclin-B2-1 (CYCB2-1).